The primary structure comprises 369 residues: UDP-N-acetylglucosamine--N-acetylmuramyl-(pentapeptide) pyrophosphoryl-undecaprenol N-acetylglucosamine transferase (369 aa).

Residues 10–12, asparagine 124, arginine 166, serine 196, and glutamine 300 contribute to the UDP-N-acetyl-alpha-D-glucosamine site; that span reads TGG.

It belongs to the glycosyltransferase 28 family. MurG subfamily.

It is found in the cell membrane. The enzyme catalyses di-trans,octa-cis-undecaprenyl diphospho-N-acetyl-alpha-D-muramoyl-L-alanyl-D-glutamyl-meso-2,6-diaminopimeloyl-D-alanyl-D-alanine + UDP-N-acetyl-alpha-D-glucosamine = di-trans,octa-cis-undecaprenyl diphospho-[N-acetyl-alpha-D-glucosaminyl-(1-&gt;4)]-N-acetyl-alpha-D-muramoyl-L-alanyl-D-glutamyl-meso-2,6-diaminopimeloyl-D-alanyl-D-alanine + UDP + H(+). It functions in the pathway cell wall biogenesis; peptidoglycan biosynthesis. Cell wall formation. Catalyzes the transfer of a GlcNAc subunit on undecaprenyl-pyrophosphoryl-MurNAc-pentapeptide (lipid intermediate I) to form undecaprenyl-pyrophosphoryl-MurNAc-(pentapeptide)GlcNAc (lipid intermediate II). The sequence is that of UDP-N-acetylglucosamine--N-acetylmuramyl-(pentapeptide) pyrophosphoryl-undecaprenol N-acetylglucosamine transferase from Desulfitobacterium hafniense (strain Y51).